A 449-amino-acid polypeptide reads, in one-letter code: Tubulin alpha chain (449 aa).

Gln11 provides a ligand contact to GTP. Lys40 carries the N6-acetyllysine modification. GTP is bound by residues Glu71, Ser140, Gly144, Thr145, Thr179, Asn206, and Asn228. Glu71 is a binding site for Mg(2+). Residue Glu254 is part of the active site.

It belongs to the tubulin family. Dimer of alpha and beta chains. A typical microtubule is a hollow water-filled tube with an outer diameter of 25 nm and an inner diameter of 15 nM. Alpha-beta heterodimers associate head-to-tail to form protofilaments running lengthwise along the microtubule wall with the beta-tubulin subunit facing the microtubule plus end conferring a structural polarity. Microtubules usually have 13 protofilaments but different protofilament numbers can be found in some organisms and specialized cells. Mg(2+) is required as a cofactor. In terms of processing, undergoes a tyrosination/detyrosination cycle, the cyclic removal and re-addition of a C-terminal tyrosine residue by the enzymes tubulin tyrosine carboxypeptidase (TTCP) and tubulin tyrosine ligase (TTL), respectively. Post-translationally, some glutamate residues at the C-terminus are either polyglutamylated or polyglycylated. These 2 modifications occur exclusively on glutamate residues and result in either polyglutamate or polyglycine chains on the gamma-carboxyl group. Both modifications can coexist on the same protein on adjacent residues, and lowering polyglycylation levels increases polyglutamylation, and reciprocally. The precise function of such modifications is still unclear but they regulate the assembly and dynamics of axonemal microtubules. Acetylation of alpha chains at Lys-40 stabilizes microtubules and affects affinity and processivity of microtubule motors. This modification has a role in multiple cellular functions, ranging from cell motility, cell cycle progression or cell differentiation to intracellular trafficking and signaling.

It is found in the cytoplasm. The protein localises to the cytoskeleton. It carries out the reaction GTP + H2O = GDP + phosphate + H(+). Tubulin is the major constituent of microtubules, a cylinder consisting of laterally associated linear protofilaments composed of alpha- and beta-tubulin heterodimers. Microtubules grow by the addition of GTP-tubulin dimers to the microtubule end, where a stabilizing cap forms. Below the cap, tubulin dimers are in GDP-bound state, owing to GTPase activity of alpha-tubulin. The polypeptide is Tubulin alpha chain (Tetrahymena thermophila).